The sequence spans 105 residues: Large ribosomal subunit protein bL21 (105 aa).

Belongs to the bacterial ribosomal protein bL21 family. In terms of assembly, part of the 50S ribosomal subunit. Contacts protein L20.

Functionally, this protein binds to 23S rRNA in the presence of protein L20. The sequence is that of Large ribosomal subunit protein bL21 from Dictyoglomus turgidum (strain DSM 6724 / Z-1310).